A 391-amino-acid polypeptide reads, in one-letter code: MALSLLSYNVSDLCLGKPPLRCLSSSSSSVSDAIAALKSSEDTFLSVWNCNHDDDNNTECECLGKISMADVICHLSKDHDHSLCALNSSVSVLLPKTRSIVLHVQPSCSLIEAIDLIIKGAQNLIVPIHTKPYTKKKQHNDNVSVTTTTHSNGQRFCWITQEDIIQFLLGFIAAFSPLPAMSLSDLGVINSTHTVVAVDYHSSASAVVSAVSNALAVQTSVAVVDGEGDDPFTSLIGEISPMTLTCCDETAAAAVATLSAGDLMAYIDGANPPESLVQIVRNRLEDKGLIGLMSLFDSLSSYSTSSGYSSEEEAPVRTTSYGRSMSSSARMARKSEAIVCNPKSSLMAVMIQAVAHRVNYAWVVEKDGCFVGMVTFVDILKVFRKFLENDM.

2 CBS domains span residues 16–81 (GKPP…DHDH) and 331–391 (MARK…ENDM).

This is CBS domain-containing protein CBSX5 (CBSX5) from Arabidopsis thaliana (Mouse-ear cress).